The chain runs to 204 residues: MYPDLSQRQTDILEYIKRVIREKGYPPSVREIGDAVGLMSSSTVHGHLQTIEEKGYIRRDPTKPRAIEILDSSSDANEKKTVFVPIIGKVTAGQPILAQENIEDTFPLPVDVVNSDTVFMLRVKGESMIDAGIMDGDLILVRQQKVARNGEIVVAMIDEEATVKRFYKEKTLIRLQPENPYMEPIYSQDVTILGKVIGVFRILH.

The H-T-H motif DNA-binding region spans Val-29–Gln-49. Catalysis depends on for autocatalytic cleavage activity residues Ser-127 and Lys-164.

This sequence belongs to the peptidase S24 family. In terms of assembly, homodimer.

The catalysed reaction is Hydrolysis of Ala-|-Gly bond in repressor LexA.. Its function is as follows. Represses a number of genes involved in the response to DNA damage (SOS response), including recA and lexA. In the presence of single-stranded DNA, RecA interacts with LexA causing an autocatalytic cleavage which disrupts the DNA-binding part of LexA, leading to derepression of the SOS regulon and eventually DNA repair. In Desulfitobacterium hafniense (strain DSM 10664 / DCB-2), this protein is LexA repressor.